Consider the following 202-residue polypeptide: Urease accessory protein UreG (202 aa).

13-20 (GPVGAGKT) contributes to the GTP binding site.

This sequence belongs to the SIMIBI class G3E GTPase family. UreG subfamily. As to quaternary structure, homodimer. UreD, UreF and UreG form a complex that acts as a GTP-hydrolysis-dependent molecular chaperone, activating the urease apoprotein by helping to assemble the nickel containing metallocenter of UreC. The UreE protein probably delivers the nickel.

It is found in the cytoplasm. Functionally, facilitates the functional incorporation of the urease nickel metallocenter. This process requires GTP hydrolysis, probably effectuated by UreG. This chain is Urease accessory protein UreG, found in Dinoroseobacter shibae (strain DSM 16493 / NCIMB 14021 / DFL 12).